Here is a 241-residue protein sequence, read N- to C-terminus: MTLQWAAVATFLYAEIGLILIFCLPFIPPQRWQKIFSFNVWGKIATFWNKAFLTIIILLIVLFLDAVREVRKYSSVHTIEKSSTSRPDAYEHTQMKLFRSQRNLYISGFSLFFWLVLRRLVTLITQLAKELSNKGVLKTQAENTNKAAKKFMEENEKLKRILKSHGKDEECVLEAENKKLVEDQEKLKTELRKTSDALSKAQNDVMEMKMQSERLSKEYDQLLKEHSELQDRLERGNKKRL.

At 1–6 the chain is on the lumenal side; that stretch reads MTLQWA. The helical transmembrane segment at 7–27 threads the bilayer; it reads AVATFLYAEIGLILIFCLPFI. The Cytoplasmic segment spans residues 28–43; sequence PPQRWQKIFSFNVWGK. Residues 44–64 form a helical membrane-spanning segment; it reads IATFWNKAFLTIIILLIVLFL. At 65-103 the chain is on the lumenal side; it reads DAVREVRKYSSVHTIEKSSTSRPDAYEHTQMKLFRSQRN. The helical transmembrane segment at 104–124 threads the bilayer; the sequence is LYISGFSLFFWLVLRRLVTLI. The Cytoplasmic segment spans residues 125-241; the sequence is TQLAKELSNK…RLERGNKKRL (117 aa). A coiled-coil region spans residues 166–233; sequence GKDEECVLEA…KEHSELQDRL (68 aa). Residues 198 to 223 are disordered; that stretch reads LSKAQNDVMEMKMQSERLSKEYDQLL. The segment covering 206 to 223 has biased composition (basic and acidic residues); it reads MEMKMQSERLSKEYDQLL. The Di-lysine motif motif lies at 238 to 241; that stretch reads KKRL.

Belongs to the BCAP29/BCAP31 family. In terms of assembly, homodimer. Heterodimer with BCAP31. Binds CASP8 (isoform 9) as a complex containing BCAP31, BCAP29, BCL2 and/or BCL2L1. Interacts with VAMP3, VAMP1 and membrane IgD immunoglobulins. May interact with ACTG1 and non-muscle myosin II.

Its subcellular location is the endoplasmic reticulum membrane. Its function is as follows. May play a role in anterograde transport of membrane proteins from the endoplasmic reticulum to the Golgi. May be involved in CASP8-mediated apoptosis. In Homo sapiens (Human), this protein is B-cell receptor-associated protein 29 (BCAP29).